A 329-amino-acid chain; its full sequence is Malate dehydrogenase (329 aa).

13 to 19 (GAAGNIS) contributes to the NAD(+) binding site. Residues Arg-94 and Arg-100 each contribute to the substrate site. Residues Asn-107, Gln-114, and 131-133 (VGN) each bind NAD(+). Substrate is bound by residues Asn-133 and Arg-164. The active-site Proton acceptor is the His-189.

Belongs to the LDH/MDH superfamily. MDH type 2 family.

It catalyses the reaction (S)-malate + NAD(+) = oxaloacetate + NADH + H(+). In terms of biological role, catalyzes the reversible oxidation of malate to oxaloacetate. The sequence is that of Malate dehydrogenase from Psychrobacter cryohalolentis (strain ATCC BAA-1226 / DSM 17306 / VKM B-2378 / K5).